The primary structure comprises 259 residues: Dolichol-phosphate mannosyltransferase subunit 1 (259 aa).

Ala2 bears the N-acetylalanine mark. At Ser3 the chain carries Phosphoserine. GDP-alpha-D-mannose-binding residues include Pro31, Tyr33, Glu35, Ile62, Asp64, Asp117, Ala118, Asp119, Arg146, Arg233, and Lys239. Residue Asp119 participates in Mg(2+) binding. Residue Asp119 coordinates Mn(2+).

Belongs to the glycosyltransferase 2 family. As to quaternary structure, component of the dolichol-phosphate mannose (DPM) synthase complex composed of DPM1, DPM2 and DPM3; within the complex, directly interacts with DPM3. This interaction may stabilize DPM1. Mg(2+) is required as a cofactor. The cofactor is Mn(2+). It depends on Ca(2+) as a cofactor.

It localises to the endoplasmic reticulum. The enzyme catalyses a di-trans,poly-cis-dolichyl phosphate + GDP-alpha-D-mannose = a di-trans,poly-cis-dolichyl beta-D-mannosyl phosphate + GDP. It functions in the pathway protein modification; protein glycosylation. Transfers mannose from GDP-mannose to dolichol monophosphate to form dolichol phosphate mannose (Dol-P-Man) which is the mannosyl donor in pathways leading to N-glycosylation, glycosyl phosphatidylinositol membrane anchoring, and O-mannosylation of proteins; catalytic subunit of the dolichol-phosphate mannose (DPM) synthase complex. This chain is Dolichol-phosphate mannosyltransferase subunit 1 (DPM1), found in Sus scrofa (Pig).